A 320-amino-acid polypeptide reads, in one-letter code: Ferrochelatase (320 aa).

The Fe cation site is built by His194 and Glu275.

Belongs to the ferrochelatase family.

Its subcellular location is the cytoplasm. The enzyme catalyses heme b + 2 H(+) = protoporphyrin IX + Fe(2+). The protein operates within porphyrin-containing compound metabolism; protoheme biosynthesis; protoheme from protoporphyrin-IX: step 1/1. Its function is as follows. Catalyzes the ferrous insertion into protoporphyrin IX. The protein is Ferrochelatase of Yersinia pestis bv. Antiqua (strain Antiqua).